The sequence spans 293 residues: 4-hydroxy-tetrahydrodipicolinate synthase (293 aa).

Pyruvate is bound at residue T45. Catalysis depends on Y133, which acts as the Proton donor/acceptor. Residue K161 is the Schiff-base intermediate with substrate of the active site. Pyruvate is bound at residue I203.

Belongs to the DapA family. Homotetramer; dimer of dimers.

The protein localises to the cytoplasm. The catalysed reaction is L-aspartate 4-semialdehyde + pyruvate = (2S,4S)-4-hydroxy-2,3,4,5-tetrahydrodipicolinate + H2O + H(+). Its pathway is amino-acid biosynthesis; L-lysine biosynthesis via DAP pathway; (S)-tetrahydrodipicolinate from L-aspartate: step 3/4. In terms of biological role, catalyzes the condensation of (S)-aspartate-beta-semialdehyde [(S)-ASA] and pyruvate to 4-hydroxy-tetrahydrodipicolinate (HTPA). This Aliivibrio salmonicida (strain LFI1238) (Vibrio salmonicida (strain LFI1238)) protein is 4-hydroxy-tetrahydrodipicolinate synthase.